The following is a 358-amino-acid chain: Peptide chain release factor 1 (358 aa).

Gln-233 is modified (N5-methylglutamine).

It belongs to the prokaryotic/mitochondrial release factor family. Methylated by PrmC. Methylation increases the termination efficiency of RF1.

It is found in the cytoplasm. Its function is as follows. Peptide chain release factor 1 directs the termination of translation in response to the peptide chain termination codons UAG and UAA. This chain is Peptide chain release factor 1, found in Staphylococcus carnosus (strain TM300).